The primary structure comprises 448 residues: MSTFRQEDVEDHYEMGEELGSGQFAIVRKCQQKGTGMEYAAKFIKKRRLPSSRRGVSREEIEREVSILREIRHPNIITLHDVFENKTDVVLILELVSGGELFDFLAEKESLTEDEATQFLKQILDGVHYLHSKRIAHFDLKPENIMLLDKHAASPRIKLIDFGIAHRIEAGSEFKNIFGTPEFVAPEIVNYEPLGLEADMWSIGVITYILLSGASPFLGETKQETLTNISAVNYDFDEEYFSSTSELAKDFIRRLLVKDPKRRMTIAQSLEHSWIKVRRREDGARKPERRRLRAARLREYSLKSHSSMPRNTSYASFERFSRVLEDVAAAEQGLRELQRGRRQCRERVCALRAAAEQREARCRDGSAGLGRDLRRLRTELGRTEALRTRAQEEARAALLGAGGLKRRLCRLENRYDALAAQVAAEVQFVRDLVRALEQERLQAECGVR.

A Protein kinase domain is found at 13 to 275 (YEMGEELGSG…IAQSLEHSWI (263 aa)). Residues 19–27 (LGSGQFAIV) and Lys42 each bind ATP. Asp139 (proton acceptor) is an active-site residue. The tract at residues 161–204 (DFGIAHRIEAGSEFKNIFGTPEFVAPEIVNYEPLGLEADMWSIG) is activation segment. Residues Thr180 and Thr225 each carry the phosphothreonine modification. Thr265 bears the Phosphothreonine; by autocatalysis mark. Thr265 is modified (phosphothreonine; by ROCK1). Ser304 carries the post-translational modification Phosphoserine; by DAPK1. Ser306 carries the post-translational modification Phosphoserine; by autocatalysis and DAPK1. Phosphoserine; by DAPK1 occurs at positions 307, 313, and 321. The interval 390–448 (AQEEARAALLGAGGLKRRLCRLENRYDALAAQVAAEVQFVRDLVRALEQERLQAECGVR) is interaction with CDC5L. The leucine-zipper stretch occupies residues 422 to 436 (VAAEVQFVRDLVRAL).

It belongs to the protein kinase superfamily. CAMK Ser/Thr protein kinase family. DAP kinase subfamily. As to quaternary structure, homooligomer in its kinase-active form (homotrimers and homodimers are reported); monomeric in its kinase-inactive form. Homodimerization is required for activation segment autophosphorylation. Interacts with DAXX, PAWR, ATF4, NLK, TCF7L2, UBE2D1, UBE2D2, UBE2D3, and CDC5L. Interacts with AR; enhanced by AATF. Interacts with LUZP1; the interaction is likely to occur throughout the cell cycle and reduces the LUZP1-mediated suppression of MYL9 phosphorylation. The cofactor is Mg(2+). Ubiquitinated. Ubiquitination mediated by the UBE2D3 E3 ligase does not lead to proteasomal degradation, but influences promyelocytic leukemia protein nuclear bodies (PML-NBs) formation in the nucleus. In terms of processing, the phosphorylation status is critical for kinase activity, oligomerization and intracellular localization. Phosphorylation at Thr-180, Thr-225 and Thr-265 is essential for activity. The phosphorylated form is localized in the cytoplasm and nuclear translocation or retention is maximal when it is not phosphorylated. Phosphorylation increases the trimeric form, and its dephosphorylation favors a kinase-inactive monomeric form. As to expression, highly expressed in heart, brain, lung, skeletal muscle, kidney and testis. Lower levels in liver and spleen.

The protein localises to the nucleus. The protein resides in the PML body. Its subcellular location is the cytoplasm. It is found in the cytoskeleton. It localises to the microtubule organizing center. The protein localises to the centrosome. The protein resides in the chromosome. Its subcellular location is the centromere. It is found in the spindle. It localises to the midbody. It carries out the reaction L-seryl-[protein] + ATP = O-phospho-L-seryl-[protein] + ADP + H(+). The enzyme catalyses L-threonyl-[protein] + ATP = O-phospho-L-threonyl-[protein] + ADP + H(+). With respect to regulation, a sequential activation is proposed: autophosphorylation at consensus sites is leading to dimerization of the catalytic domain and activation segment exchange (producing an active confirmation of both kinase modules in trans) followed by phosphorylation at Thr-180 in the activation segment and at other regulatory sites. Phosphorylation at Thr-180, Thr-225 and Thr-265 is essential for activity. Inhibited by pyridone 6 (K00225), a potent, ATP-competitive inhibitor. Phosphorylation at Thr-180, Thr-225 and Thr-265 is essential for activity. Serine/threonine kinase which is involved in the regulation of apoptosis, autophagy, transcription, translation and actin cytoskeleton reorganization. Regulates both type I (caspase-dependent) apoptotic and type II (caspase-independent) autophagic cell deaths signal, depending on the cellular setting. Involved in formation of promyelocytic leukemia protein nuclear body (PML-NB). Involved in apoptosis involving PAWR which mediates cytoplasmic relocation; in vitro phosphorylates PAWR. Regulates myosin phosphorylation in both smooth muscle and non-muscle cells. In smooth muscle, regulates myosin either directly by phosphorylating MYL12B and MYL9 or through inhibition of smooth muscle myosin phosphatase (SMPP1M) via phosphorylation of PPP1R12A; the inhibition of SMPP1M functions to enhance muscle responsiveness to Ca(2+) and promote a contractile state. Phosphorylates MYL12B in non-muscle cells leading to reorganization of actin cytoskeleton such as in regulation of cell polarity and cell migration. Positively regulates canonical Wnt/beta-catenin signaling through interaction with NLK and TCF7L2; disrupts the NLK-TCF7L2 complex thereby influencing the phosphorylation of TCF7L2 by NLK. Phosphorylates STAT3 and enhances its transcriptional activity. Enhances transcription from AR-responsive promoters in a hormone- and kinase-dependent manner. Phosphorylates histone H3 on 'Thr-11' at centromeres during mitosis. Phosphorylates RPL13A on 'Ser-77' upon interferon-gamma activation which is causing RPL13A release from the ribosome, RPL13A association with the GAIT complex and its subsequent involvement in transcript-selective translation inhibition. In Mus musculus (Mouse), this protein is Death-associated protein kinase 3 (Dapk3).